Consider the following 205-residue polypeptide: Protein N-terminal glutamine amidohydrolase (205 aa).

Catalysis depends on residues C20, H74, and D90.

It belongs to the NTAQ1 family. In terms of assembly, monomer.

It catalyses the reaction N-terminal L-glutaminyl-[protein] + H2O = N-terminal L-glutamyl-[protein] + NH4(+). In terms of biological role, mediates the side-chain deamidation of N-terminal glutamine residues to glutamate, an important step in N-end rule pathway of protein degradation. Conversion of the resulting N-terminal glutamine to glutamate renders the protein susceptible to arginylation, polyubiquitination and degradation as specified by the N-end rule. Does not act on substrates with internal or C-terminal glutamine and does not act on non-glutamine residues in any position. The chain is Protein N-terminal glutamine amidohydrolase (tun) from Drosophila melanogaster (Fruit fly).